Here is a 92-residue protein sequence, read N- to C-terminus: uncharacterized protein (92 aa).

This is an uncharacterized protein from Haemophilus influenzae (strain ATCC 51907 / DSM 11121 / KW20 / Rd).